The primary structure comprises 1370 residues: DNA-directed RNA polymerase subunit beta (1370 aa).

Belongs to the RNA polymerase beta chain family. As to quaternary structure, the RNAP catalytic core consists of 2 alpha, 1 beta, 1 beta' and 1 omega subunit. When a sigma factor is associated with the core the holoenzyme is formed, which can initiate transcription.

The enzyme catalyses RNA(n) + a ribonucleoside 5'-triphosphate = RNA(n+1) + diphosphate. Functionally, DNA-dependent RNA polymerase catalyzes the transcription of DNA into RNA using the four ribonucleoside triphosphates as substrates. The protein is DNA-directed RNA polymerase subunit beta of Bordetella petrii (strain ATCC BAA-461 / DSM 12804 / CCUG 43448).